The sequence spans 469 residues: Arginine biosynthesis bifunctional protein ArgJ, mitochondrial (469 aa).

6 residues coordinate substrate: threonine 199, lysine 228, threonine 239, glutamate 325, asparagine 464, and threonine 469. The active-site Nucleophile is the threonine 239.

Belongs to the ArgJ family. As to quaternary structure, heterodimer of an alpha and a beta chain. In terms of processing, the alpha and beta chains are autoproteolytically processed from a single precursor protein within the mitochondrion.

The protein resides in the mitochondrion matrix. The enzyme catalyses N(2)-acetyl-L-ornithine + L-glutamate = N-acetyl-L-glutamate + L-ornithine. The catalysed reaction is L-glutamate + acetyl-CoA = N-acetyl-L-glutamate + CoA + H(+). It functions in the pathway amino-acid biosynthesis; L-arginine biosynthesis; L-ornithine and N-acetyl-L-glutamate from L-glutamate and N(2)-acetyl-L-ornithine (cyclic): step 1/1. The protein operates within amino-acid biosynthesis; L-arginine biosynthesis; N(2)-acetyl-L-ornithine from L-glutamate: step 1/4. Functionally, catalyzes two activities which are involved in the cyclic version of arginine biosynthesis: the synthesis of acetylglutamate from glutamate and acetyl-CoA, and of ornithine by transacetylation between acetylornithine and glutamate. The protein is Arginine biosynthesis bifunctional protein ArgJ, mitochondrial of Sordaria macrospora (strain ATCC MYA-333 / DSM 997 / K(L3346) / K-hell).